The sequence spans 403 residues: Mitochondrial intermembrane space import and assembly protein 40 (403 aa).

A mitochondrion-targeting transit peptide spans Met1–Leu31. Residues Ala33 to Lys46 lie on the Mitochondrial matrix side of the membrane. The chain crosses the membrane as a helical; Signal-anchor for type II membrane protein span at residues Thr47 to Pro66. Over Asn67–Pro403 the chain is Mitochondrial intermembrane. Basic and acidic residues-rich tracts occupy residues Arg75–Glu84, Asn101–Glu118, Glu147–Glu168, Ser206–Thr230, and Glu262–Gln271. Positions Arg75–Ile292 are disordered. Cystine bridges form between Cys296–Cys298, Cys307–Cys340, and Cys317–Cys330. The 45-residue stretch at His304–Tyr348 folds into the CHCH domain. 2 consecutive short sequence motifs (cx9C motif) follow at residues Cys307–Cys317 and Cys330–Cys340. The disordered stretch occupies residues Gln351–Pro403. Positions Thr369–Ser378 are enriched in polar residues. Residues Asn382–Pro403 show a composition bias toward basic and acidic residues.

In terms of assembly, monomer. Interacts with the FAD-linked sulfhydryl oxidase ERV1 and with the substrate proteins COX17, TIM9, and TIM13, forming transient intermolecular disulfide bridges. Interacts with FCJ1. Cu(2+) serves as cofactor. Zn(2+) is required as a cofactor.

It localises to the mitochondrion inner membrane. In terms of biological role, required for the import and folding of small cysteine-containing proteins (small Tim) in the mitochondrial intermembrane space (IMS). Forms a redox cycle with ERV1 that involves a disulfide relay system. Precursor proteins to be imported into the IMS are translocated in their reduced form into the mitochondria. The oxidized form of MIA40 forms a transient intermolecular disulfide bridge with the reduced precursor protein, resulting in oxidation of the precursor protein that now contains an intramolecular disulfide bond and is able to undergo folding in the IMS. Reduced MIA40 is reoxidized by FAD-linked sulfhydryl oxidase ERV1. In Saccharomyces cerevisiae (strain ATCC 204508 / S288c) (Baker's yeast), this protein is Mitochondrial intermembrane space import and assembly protein 40 (MIA40).